The following is a 249-amino-acid chain: Phosphoribosylaminoimidazole-succinocarboxamide synthase (249 aa).

It belongs to the SAICAR synthetase family.

The catalysed reaction is 5-amino-1-(5-phospho-D-ribosyl)imidazole-4-carboxylate + L-aspartate + ATP = (2S)-2-[5-amino-1-(5-phospho-beta-D-ribosyl)imidazole-4-carboxamido]succinate + ADP + phosphate + 2 H(+). The protein operates within purine metabolism; IMP biosynthesis via de novo pathway; 5-amino-1-(5-phospho-D-ribosyl)imidazole-4-carboxamide from 5-amino-1-(5-phospho-D-ribosyl)imidazole-4-carboxylate: step 1/2. This is Phosphoribosylaminoimidazole-succinocarboxamide synthase from Chloroflexus aurantiacus (strain ATCC 29366 / DSM 635 / J-10-fl).